We begin with the raw amino-acid sequence, 103 residues long: NADH-quinone oxidoreductase subunit K (103 aa).

A run of 3 helical transmembrane segments spans residues 6-26 (LSHF…GIFL), 32-52 (LVLL…FVAF), and 63-83 (IFVF…LAIL).

This sequence belongs to the complex I subunit 4L family. NDH-1 is composed of 14 different subunits. Subunits NuoA, H, J, K, L, M, N constitute the membrane sector of the complex.

It localises to the cell inner membrane. The catalysed reaction is a quinone + NADH + 5 H(+)(in) = a quinol + NAD(+) + 4 H(+)(out). Functionally, NDH-1 shuttles electrons from NADH, via FMN and iron-sulfur (Fe-S) centers, to quinones in the respiratory chain. The immediate electron acceptor for the enzyme in this species is believed to be ubiquinone. Couples the redox reaction to proton translocation (for every two electrons transferred, four hydrogen ions are translocated across the cytoplasmic membrane), and thus conserves the redox energy in a proton gradient. The protein is NADH-quinone oxidoreductase subunit K of Dechloromonas aromatica (strain RCB).